Reading from the N-terminus, the 128-residue chain is Holo-[acyl-carrier-protein] synthase (128 aa).

Aspartate 8 and glutamate 60 together coordinate Mg(2+).

The protein belongs to the P-Pant transferase superfamily. AcpS family. It depends on Mg(2+) as a cofactor.

It localises to the cytoplasm. The enzyme catalyses apo-[ACP] + CoA = holo-[ACP] + adenosine 3',5'-bisphosphate + H(+). Its function is as follows. Transfers the 4'-phosphopantetheine moiety from coenzyme A to a Ser of acyl-carrier-protein. The chain is Holo-[acyl-carrier-protein] synthase from Anaeromyxobacter dehalogenans (strain 2CP-1 / ATCC BAA-258).